The primary structure comprises 540 residues: NAD(P)H-quinone oxidoreductase subunit 2 B, chloroplastic (540 aa).

The next 13 membrane-spanning stretches (helical) occupy residues Leu24–Leu44, Ile57–Phe77, Ile99–Ile119, Met124–Cys144, Phe149–Tyr169, Tyr183–Gly203, Pro227–Ala247, Trp325–Ile345, Met353–Asp373, Tyr384–Leu404, Ala425–Phe445, Leu448–Leu468, and Met514–Ile534.

Belongs to the complex I subunit 2 family. As to quaternary structure, NDH is composed of at least 16 different subunits, 5 of which are encoded in the nucleus.

Its subcellular location is the plastid. The protein resides in the chloroplast thylakoid membrane. The catalysed reaction is a plastoquinone + NADH + (n+1) H(+)(in) = a plastoquinol + NAD(+) + n H(+)(out). It carries out the reaction a plastoquinone + NADPH + (n+1) H(+)(in) = a plastoquinol + NADP(+) + n H(+)(out). NDH shuttles electrons from NAD(P)H:plastoquinone, via FMN and iron-sulfur (Fe-S) centers, to quinones in the photosynthetic chain and possibly in a chloroplast respiratory chain. The immediate electron acceptor for the enzyme in this species is believed to be plastoquinone. Couples the redox reaction to proton translocation, and thus conserves the redox energy in a proton gradient. This is NAD(P)H-quinone oxidoreductase subunit 2 B, chloroplastic from Coffea arabica (Arabian coffee).